The sequence spans 744 residues: Tripartite motif-containing protein 2 (744 aa).

The residue at position 10 (Ser10) is a Phosphoserine. The segment at 23-64 (CSICLERYKNPKVLPCLHTFCERCLQNYIPAHSLTLSCPVCR) adopts an RING-type zinc-finger fold. The B box-type zinc-finger motif lies at 113–154 (GKPLSCPNHDGNVMEFYCQSCETAMCRECTEGEHAEHPTVPL). 4 residues coordinate Zn(2+): Cys118, His121, Cys141, and His146. Residues 320–421 (TTNAVASETV…IRGSPFKLKV (102 aa)) form a Filamin repeat. At Thr371 the chain carries Phosphothreonine. Ser375, Ser424, and Ser428 each carry phosphoserine. Residues 432 to 462 (EGVKRRVKSPGSGHVKQKAVKRPASMYSTGK) are disordered. NHL repeat units lie at residues 473–516 (IFRV…FSND), 520–563 (KSRF…FSSD), 564–605 (GKFK…FQPN), 609–652 (VTRF…FNQE), 656–699 (MLKF…FDGS), and 700–743 (GSFL…YRYL).

Belongs to the TRIM/RBCC family. As to quaternary structure, forms homooligomers. Interacts with TRIM3; this interaction reduces TRIM2 activity. Interacts with myosin V; myosin V may not be a substrate for ubiquitination. Interacts with NEFL. Interacts with phosphorylated BCL2L11. Interacts with SIRPA. RING-type zinc finger-dependent and UBE2D1-dependent autoubiquitination.

It localises to the cytoplasm. The enzyme catalyses S-ubiquitinyl-[E2 ubiquitin-conjugating enzyme]-L-cysteine + [acceptor protein]-L-lysine = [E2 ubiquitin-conjugating enzyme]-L-cysteine + N(6)-ubiquitinyl-[acceptor protein]-L-lysine.. It participates in protein modification; protein ubiquitination. In terms of biological role, UBE2D1-dependent E3 ubiquitin-protein ligase that mediates the ubiquitination of NEFL and of phosphorylated BCL2L11. Plays a neuroprotective function. May play a role in neuronal rapid ischemic tolerance. Plays a role in antiviral immunity and limits New World arenavirus infection independently of its ubiquitin ligase activity. This is Tripartite motif-containing protein 2 (TRIM2) from Callithrix jacchus (White-tufted-ear marmoset).